Consider the following 76-residue polypeptide: DNA-directed RNA polymerase subunit epsilon (76 aa).

This sequence belongs to the RNA polymerase subunit epsilon family. As to quaternary structure, RNAP is composed of a core of 2 alpha, a beta and a beta' subunit. The core is associated with a delta subunit, and at least one of epsilon or omega. When a sigma factor is associated with the core the holoenzyme is formed, which can initiate transcription.

It catalyses the reaction RNA(n) + a ribonucleoside 5'-triphosphate = RNA(n+1) + diphosphate. Its function is as follows. A non-essential component of RNA polymerase (RNAP). This chain is DNA-directed RNA polymerase subunit epsilon, found in Streptococcus equi subsp. zooepidemicus (strain H70).